We begin with the raw amino-acid sequence, 284 residues long: D-tagatose-1,6-bisphosphate aldolase subunit GatY (284 aa).

Catalysis depends on Asp82, which acts as the Proton donor. Residues His83 and His180 each coordinate Zn(2+). Gly181 is a binding site for dihydroxyacetone phosphate. His208 provides a ligand contact to Zn(2+). Dihydroxyacetone phosphate is bound by residues 209–211 and 230–233; these read GAS and NVAT.

This sequence belongs to the class II fructose-bisphosphate aldolase family. TagBP aldolase GatY subfamily. As to quaternary structure, forms a complex with GatZ. Zn(2+) serves as cofactor.

The enzyme catalyses D-tagatofuranose 1,6-bisphosphate = D-glyceraldehyde 3-phosphate + dihydroxyacetone phosphate. Its pathway is carbohydrate metabolism; D-tagatose 6-phosphate degradation; D-glyceraldehyde 3-phosphate and glycerone phosphate from D-tagatose 6-phosphate: step 2/2. Its function is as follows. Catalytic subunit of the tagatose-1,6-bisphosphate aldolase GatYZ, which catalyzes the reversible aldol condensation of dihydroxyacetone phosphate (DHAP or glycerone-phosphate) with glyceraldehyde 3-phosphate (G3P) to produce tagatose 1,6-bisphosphate (TBP). Requires GatZ subunit for full activity and stability. Is involved in the catabolism of galactitol. The sequence is that of D-tagatose-1,6-bisphosphate aldolase subunit GatY from Escherichia coli (strain SMS-3-5 / SECEC).